Consider the following 185-residue polypeptide: Ribosome-recycling factor (185 aa).

It belongs to the RRF family.

It localises to the cytoplasm. Responsible for the release of ribosomes from messenger RNA at the termination of protein biosynthesis. May increase the efficiency of translation by recycling ribosomes from one round of translation to another. The chain is Ribosome-recycling factor from Bacillus pumilus (strain SAFR-032).